The primary structure comprises 264 residues: Phosphoribosylaminoimidazole-succinocarboxamide synthase 1 (264 aa).

The protein belongs to the SAICAR synthetase family.

The enzyme catalyses 5-amino-1-(5-phospho-D-ribosyl)imidazole-4-carboxylate + L-aspartate + ATP = (2S)-2-[5-amino-1-(5-phospho-beta-D-ribosyl)imidazole-4-carboxamido]succinate + ADP + phosphate + 2 H(+). The protein operates within purine metabolism; IMP biosynthesis via de novo pathway; 5-amino-1-(5-phospho-D-ribosyl)imidazole-4-carboxamide from 5-amino-1-(5-phospho-D-ribosyl)imidazole-4-carboxylate: step 1/2. The sequence is that of Phosphoribosylaminoimidazole-succinocarboxamide synthase 1 (purC1) from Mesorhizobium japonicum (strain LMG 29417 / CECT 9101 / MAFF 303099) (Mesorhizobium loti (strain MAFF 303099)).